The following is a 285-amino-acid chain: Putative pyruvate, phosphate dikinase regulatory protein (285 aa).

165-172 (GVSRTSKT) lines the ADP pocket.

This sequence belongs to the pyruvate, phosphate/water dikinase regulatory protein family. PDRP subfamily.

The enzyme catalyses N(tele)-phospho-L-histidyl/L-threonyl-[pyruvate, phosphate dikinase] + ADP = N(tele)-phospho-L-histidyl/O-phospho-L-threonyl-[pyruvate, phosphate dikinase] + AMP + H(+). It catalyses the reaction N(tele)-phospho-L-histidyl/O-phospho-L-threonyl-[pyruvate, phosphate dikinase] + phosphate + H(+) = N(tele)-phospho-L-histidyl/L-threonyl-[pyruvate, phosphate dikinase] + diphosphate. Functionally, bifunctional serine/threonine kinase and phosphorylase involved in the regulation of the pyruvate, phosphate dikinase (PPDK) by catalyzing its phosphorylation/dephosphorylation. The chain is Putative pyruvate, phosphate dikinase regulatory protein from Lactobacillus delbrueckii subsp. bulgaricus (strain ATCC 11842 / DSM 20081 / BCRC 10696 / JCM 1002 / NBRC 13953 / NCIMB 11778 / NCTC 12712 / WDCM 00102 / Lb 14).